We begin with the raw amino-acid sequence, 415 residues long: ATP-dependent RNA helicase RhlB (415 aa).

Residues 9 to 37 carry the Q motif motif; it reads KKFSDFALYPPIVEVLDSKGFNNCTPIQA. The 180-residue stretch at 40–219 folds into the Helicase ATP-binding domain; the sequence is LPTTLAGKDV…FEHMNNAEYV (180 aa). 53-60 is a binding site for ATP; it reads AQTGTGKT. The DEAD box motif lies at 165-168; that stretch reads DEAD. Residues 245–390 form the Helicase C-terminal domain; the sequence is RLLQTLIEEE…VSKYNSDALL (146 aa). Residues 396–415 form a disordered region; that stretch reads PKRLTRRRSGAPRHNRKRPG. The segment covering 398-415 has biased composition (basic residues); that stretch reads RLTRRRSGAPRHNRKRPG.

The protein belongs to the DEAD box helicase family. RhlB subfamily. In terms of assembly, component of the RNA degradosome, which is a multiprotein complex involved in RNA processing and mRNA degradation.

The protein resides in the cytoplasm. The enzyme catalyses ATP + H2O = ADP + phosphate + H(+). DEAD-box RNA helicase involved in RNA degradation. Has RNA-dependent ATPase activity and unwinds double-stranded RNA. This Sodalis glossinidius (strain morsitans) protein is ATP-dependent RNA helicase RhlB.